A 161-amino-acid polypeptide reads, in one-letter code: Protein-export protein SecB (161 aa).

It belongs to the SecB family. Homotetramer, a dimer of dimers. One homotetramer interacts with 1 SecA dimer.

Its subcellular location is the cytoplasm. One of the proteins required for the normal export of preproteins out of the cell cytoplasm. It is a molecular chaperone that binds to a subset of precursor proteins, maintaining them in a translocation-competent state. It also specifically binds to its receptor SecA. This is Protein-export protein SecB from Pseudomonas putida (strain ATCC 700007 / DSM 6899 / JCM 31910 / BCRC 17059 / LMG 24140 / F1).